Here is a 405-residue protein sequence, read N- to C-terminus: Protein NDRG4 (405 aa).

Residues 352-405 (AGAVPSASMTRLARSRTASLTSASSVDGARPRPCTQSESSDGIGQINHTMEVSC) are disordered. The span at 361–376 (TRLARSRTASLTSASS) shows a compositional bias: low complexity. Residues 385–405 (CTQSESSDGIGQINHTMEVSC) show a composition bias toward polar residues.

The protein belongs to the NDRG family.

The protein localises to the cytoplasm. It is found in the cytosol. Functionally, contributes to the maintenance of intracerebral BDNF levels within the normal range. May enhance growth factor-induced ERK1 and ERK2 phosphorylation. May attenuate growth factor-promoted ELK1 phosphorylation in a microtubule-dependent manner. This is Protein NDRG4 from Xenopus tropicalis (Western clawed frog).